The chain runs to 324 residues: MNREQHGARHVPVLLERADELLGPALTEPGAVYVDATLGLGGHAEHFLTRYPGLRLVGLDRDTEALRLAGERLAPFAERITLVHTRYDGIADALGQAGLPPTGSVSAILMDLGVSSMQLDEAERGFAYSVDAPLDMRMDPTSGITAADVLNTYSHGDLARVLKNYGEERFAGKIASEVIRRRAHKPFETSGELVELLYATIPAAARRTGGHPAKRTFQALRVEVNGELDSLRAALPAALDALRVGGRIVVMSYQSLEDRVVKQELAARTSSRTPVDLPVELPGMGPEFRLLTRGAEKAGEREIAENPRAAPVRMRAAERIEAAS.

S-adenosyl-L-methionine-binding positions include 41–43 (GGH), aspartate 60, tyrosine 87, aspartate 111, and glutamine 118.

This sequence belongs to the methyltransferase superfamily. RsmH family.

It localises to the cytoplasm. The catalysed reaction is cytidine(1402) in 16S rRNA + S-adenosyl-L-methionine = N(4)-methylcytidine(1402) in 16S rRNA + S-adenosyl-L-homocysteine + H(+). Its function is as follows. Specifically methylates the N4 position of cytidine in position 1402 (C1402) of 16S rRNA. The sequence is that of Ribosomal RNA small subunit methyltransferase H from Nocardia farcinica (strain IFM 10152).